A 71-amino-acid polypeptide reads, in one-letter code: Long neurotoxin Tx-NM3-1 (71 aa).

Disulfide bonds link Cys-3/Cys-20, Cys-14/Cys-41, Cys-26/Cys-30, Cys-45/Cys-56, and Cys-57/Cys-62.

Expressed by the venom gland.

The protein localises to the secreted. In terms of biological role, binds with high affinity to muscular (alpha-1-beta-1-gamma-delta/CHRNA1-CHRNB1-CHRNG-CHRND) and neuronal (alpha-7/CHRNA7) nicotinic acetylcholine receptor (nAChR) and inhibits acetylcholine from binding to the receptor, thereby impairing neuromuscular and neuronal transmission. Ranges of nAChR inhibition are in nanomolar (competitive binding with alpha-bungarotoxin gives Ki=1.66 nM on muscle nAChR and Ki=4.84 nM on alpha-7). Also shows moderate inhibition on GABA(A) alpha-1-beta-3-gamma-2 receptor (GABRA1-GABRB3-GABRG2) (IC(50)=0.68 uM), and a lower inhibition on alpha-1-beta-2-gamma-2 (GABRA1-GABRB2-GABRG2) and alpha-3-beta-2-gamma-2 (GABRA3-GABRB2-GABRG2). This Naja melanoleuca (Forest cobra) protein is Long neurotoxin Tx-NM3-1.